The primary structure comprises 466 residues: L-seryl-tRNA(Sec) selenium transferase (466 aa).

Lysine 293 is modified (N6-(pyridoxal phosphate)lysine).

It belongs to the SelA family. The cofactor is pyridoxal 5'-phosphate.

The protein localises to the cytoplasm. It catalyses the reaction L-seryl-tRNA(Sec) + selenophosphate + H(+) = L-selenocysteinyl-tRNA(Sec) + phosphate. It participates in aminoacyl-tRNA biosynthesis; selenocysteinyl-tRNA(Sec) biosynthesis; selenocysteinyl-tRNA(Sec) from L-seryl-tRNA(Sec) (bacterial route): step 1/1. In terms of biological role, converts seryl-tRNA(Sec) to selenocysteinyl-tRNA(Sec) required for selenoprotein biosynthesis. The chain is L-seryl-tRNA(Sec) selenium transferase from Desulfotalea psychrophila (strain LSv54 / DSM 12343).